An 89-amino-acid polypeptide reads, in one-letter code: Small ribosomal subunit protein uS15 (89 aa).

Belongs to the universal ribosomal protein uS15 family. Part of the 30S ribosomal subunit. Forms a bridge to the 50S subunit in the 70S ribosome, contacting the 23S rRNA.

In terms of biological role, one of the primary rRNA binding proteins, it binds directly to 16S rRNA where it helps nucleate assembly of the platform of the 30S subunit by binding and bridging several RNA helices of the 16S rRNA. Its function is as follows. Forms an intersubunit bridge (bridge B4) with the 23S rRNA of the 50S subunit in the ribosome. This chain is Small ribosomal subunit protein uS15, found in Chlorobium phaeobacteroides (strain DSM 266 / SMG 266 / 2430).